Reading from the N-terminus, the 254-residue chain is Segregation and condensation protein A (254 aa).

This sequence belongs to the ScpA family. Component of a cohesin-like complex composed of ScpA, ScpB and the Smc homodimer, in which ScpA and ScpB bind to the head domain of Smc. The presence of the three proteins is required for the association of the complex with DNA.

Its subcellular location is the cytoplasm. In terms of biological role, participates in chromosomal partition during cell division. May act via the formation of a condensin-like complex containing Smc and ScpB that pull DNA away from mid-cell into both cell halves. The polypeptide is Segregation and condensation protein A (Clostridium tetani (strain Massachusetts / E88)).